We begin with the raw amino-acid sequence, 663 residues long: Subtilisin-like serine protease (663 aa).

The first 23 residues, 1-23, serve as a signal peptide directing secretion; sequence MKKFGAVVLALFLVGLMAGSVLA. Positions 24 to 136 are cleaved as a propeptide — removed in mature form; it reads APQKPAVRNV…IQEDYVVKVA (113 aa). In terms of domain architecture, Peptidase S8 spans 139–439; sequence TEGLDESAAQ…AGRVNAYKAA (301 aa). Residues Asp170, His203, and Ser382 each act as charge relay system in the active site. 9 residues coordinate Ca(2+): Pro420, Ile423, Asp483, Leu484, Asp485, Asp497, Tyr498, Thr501, and Glu507. The tract at residues 537-565 is disordered; that stretch reads VSDGSLGQPSGGGSEPSPSPSPEPTVDEK. The propeptide at 563-663 is removed in mature form; it reads DEKTFTGTVH…YQLDAKVYYG (101 aa).

Belongs to the peptidase S8 family. Monomer.

The catalysed reaction is Hydrolysis of proteins with broad specificity for peptide bonds, and a preference for a large uncharged residue in P1. Hydrolyzes peptide amides.. Its activity is regulated as follows. Resistant to treatment with 5% SDS, 8 M urea, 10% Triton X-100 or 10% Tween-20. Fully active although less stable in the presence of 10 mM EDTA. Activity not affected by the absence or presence of 10 mM CaCl(2). Unstable in the presence of 2 M or over GdnHCl and loses 35% and 99% of its activity upon incubation with 2 and 4 M GdnHCl, respectively, for 1 hour at 55 degrees Celsius. Nearly fully loses activity upon incubation at pH 2.0. In terms of biological role, serine protease with a broad substrate specificity. This Thermococcus kodakarensis (strain ATCC BAA-918 / JCM 12380 / KOD1) (Pyrococcus kodakaraensis (strain KOD1)) protein is Subtilisin-like serine protease.